Here is a 1499-residue protein sequence, read N- to C-terminus: B-cell CLL/lymphoma 9-like protein (1499 aa).

Disordered stretches follow at residues 1–238 (MRIL…PPSQ) and 271–500 (VPRA…MGQQ). Over residues 20 to 37 (GSPPLSPRGHCPPAPAKP) the composition is skewed to pro residues. Phosphoserine is present on residues S21 and S25. K36 is subject to N6-acetyllysine. Composition is skewed to polar residues over residues 45-70 (TNHG…TCNV) and 85-96 (NQISPSNSSLKN). The residue at position 88 (S88) is a Phosphoserine. K108 and K110 each carry N6-acetyllysine. Composition is skewed to basic and acidic residues over residues 114–126 (DRSV…EQRE) and 134–153 (SEAK…ERKQ). Residues S116 and S118 each carry the phosphoserine modification. Position 137 is an N6-acetyllysine (K137). A compositionally biased stretch (polar residues) spans 193-205 (PGQTTQLPLSESS). The segment covering 222–232 (PGGGGGGGGVP) has biased composition (gly residues). Pro residues-rich tracts occupy residues 281-291 (KVPPTPEPLPL) and 301-325 (SQPP…PPEG). Residues 304-533 (PPLPPPPPPA…QEEYYEEKRR (230 aa)) are necessary for interaction with CTNNB1. Composition is skewed to low complexity over residues 351–363 (THPN…TANN) and 370–387 (DPSS…AAPG). A compositionally biased stretch (basic and acidic residues) spans 399–421 (LSKEQLEHRERSLQTLRDIERLL). Phosphoserine is present on S424. The segment covering 445-458 (AQAPPPPQQPPTAP) has biased composition (pro residues). T514 carries the phosphothreonine modification. R680 carries the post-translational modification Asymmetric dimethylarginine. Phosphoserine occurs at positions 750, 813, 915, 926, 938, 942, 947, 975, 987, 991, 997, 1004, 1010, and 1017. Disordered stretches follow at residues 888–1084 (SHMP…QNPL) and 1116–1201 (ELLP…PQNS). Over residues 935–960 (PTLSQVHSPLVTSPSANLKSPQTPSQ) the composition is skewed to polar residues. Polar residues predominate over residues 978 to 996 (VLGSSLSVRSPTGSPSRLK). 2 stretches are compositionally biased toward polar residues: residues 1019 to 1041 (GVSQ…NMEQ) and 1069 to 1084 (LPFT…QNPL). Pro residues-rich tracts occupy residues 1122–1132 (PLLPPPPPPQG) and 1168–1179 (HEPPPAMLPSPT). A Glycyl lysine isopeptide (Lys-Gly) (interchain with G-Cter in SUMO2) cross-link involves residue K1344.

It belongs to the BCL9 family. In terms of assembly, found in a complex with CDC73; CTNNB1 and PYGO1. Interacts with CTNNB1. As to expression, expressed in breast, ductal and invasive ductal carcinomas of the breast, sporadic colorectal adenomas and carcinomas (at protein level). Expressed in fetal brain. Expressed in lung, amygdala, eye, prostate, pancreatic and prostate cancers, head and neck tumors and embryonal tumor.

It localises to the nucleus. Functionally, transcriptional regulator that acts as an activator. Promotes beta-catenin transcriptional activity. Plays a role in tumorigenesis. Enhances the neoplastic transforming activity of CTNNB1. The polypeptide is B-cell CLL/lymphoma 9-like protein (BCL9L) (Homo sapiens (Human)).